We begin with the raw amino-acid sequence, 189 residues long: Interferon alpha-1 (189 aa).

A signal peptide spans 1–23; the sequence is MARLCAFLMVLAVLSYWPTCSLG. Intrachain disulfides connect Cys-24–Cys-122 and Cys-52–Cys-162. N-linked (GlcNAc...) asparagine glycosylation occurs at Asn-101.

This sequence belongs to the alpha/beta interferon family. In terms of assembly, interacts with CR2. Post-translationally, glycosylated.

It localises to the secreted. In terms of biological role, produced by macrophages, IFN-alpha have antiviral activities. Interferon stimulates the production of two enzymes: a protein kinase and an oligoadenylate synthetase. This is Interferon alpha-1 (Ifna1) from Mus musculus (Mouse).